A 282-amino-acid chain; its full sequence is Exo-glucosaminidase LytG (282 aa).

The first 29 residues, 1-29 (MARKKLKKRKLLISLFFLVSIPLALFVLA), serve as a signal peptide directing secretion. A GW domain is found at 203–281 (SLKSVDLNAS…DDSAVEIKEA (79 aa)).

The protein belongs to the glycosyl hydrolase 73 family. Mg(2+) serves as cofactor.

The protein resides in the secreted. It is found in the cell wall. Its activity is regulated as follows. Inhibited by EDTA. In terms of biological role, is the major glucosaminidase responsible for peptidoglycan structural determination during vegetative growth. Catalyzes the hydrolysis of 1,4-beta-linkages between N-acetyl-D-glucosamine and N-acetylmuramic acid residues in peptidoglycan. Acts processively from the ends of the glycan strands. Also plays a role in motility, chemotaxis and cell division. The chain is Exo-glucosaminidase LytG (lytG) from Bacillus subtilis (strain 168).